A 465-amino-acid polypeptide reads, in one-letter code: MELGNTRCVHIVGIGGAGMSAIAELLLKSGFTVTGSDLVASEVTGKLQDQGAAVALGHSAENIGACDVVVYSSAVAASENEEVAAALQKGIPVIKRDEMLGELMRYKSGICVAGTHGKTTTTAMIATMLIGAGESPTVMIGGISDDLKGSTMVGSGKYMVIEADEYDRAFLKLTPSLAVINSLEMEHTDTYADIEALRDAFVAFANKVPFYGRVFCCVDWPEVRKIIPRMNRRLFTYGIEESADLMARDIQIVGHETRFTVDYQKQEMARVSIAAPGRHNVHNALAAIATGLEMGLPVDSIVSGLASFSGMRRRFQILYGRAGGPVIVDDYAHHPSEVKAAVKAARAGWPEHEVIAVFQPHLFSRTTAFADEYGWALSNADRVCVADVFAAREKTADYPGVSGELVAEAALMAGAQQVSFIPDREELCTTLQGYCVPGNLLLCMGAGDITKMASELADHCRKNEP.

Residue 114 to 120 (GTHGKTT) coordinates ATP.

It belongs to the MurCDEF family.

Its subcellular location is the cytoplasm. It catalyses the reaction UDP-N-acetyl-alpha-D-muramate + L-alanine + ATP = UDP-N-acetyl-alpha-D-muramoyl-L-alanine + ADP + phosphate + H(+). It functions in the pathway cell wall biogenesis; peptidoglycan biosynthesis. In terms of biological role, cell wall formation. The polypeptide is UDP-N-acetylmuramate--L-alanine ligase (Chlorobium phaeobacteroides (strain BS1)).